The chain runs to 96 residues: Co-chaperonin GroES (96 aa).

It belongs to the GroES chaperonin family. As to quaternary structure, heptamer of 7 subunits arranged in a ring. Interacts with the chaperonin GroEL.

The protein resides in the cytoplasm. Its function is as follows. Together with the chaperonin GroEL, plays an essential role in assisting protein folding. The GroEL-GroES system forms a nano-cage that allows encapsulation of the non-native substrate proteins and provides a physical environment optimized to promote and accelerate protein folding. GroES binds to the apical surface of the GroEL ring, thereby capping the opening of the GroEL channel. This Halorhodospira halophila (strain DSM 244 / SL1) (Ectothiorhodospira halophila (strain DSM 244 / SL1)) protein is Co-chaperonin GroES.